We begin with the raw amino-acid sequence, 284 residues long: Bifunctional protein FolD (284 aa).

NADP(+)-binding positions include 166-168 (GAS) and Ile-232.

The protein belongs to the tetrahydrofolate dehydrogenase/cyclohydrolase family. As to quaternary structure, homodimer.

The enzyme catalyses (6R)-5,10-methylene-5,6,7,8-tetrahydrofolate + NADP(+) = (6R)-5,10-methenyltetrahydrofolate + NADPH. It carries out the reaction (6R)-5,10-methenyltetrahydrofolate + H2O = (6R)-10-formyltetrahydrofolate + H(+). Its pathway is one-carbon metabolism; tetrahydrofolate interconversion. In terms of biological role, catalyzes the oxidation of 5,10-methylenetetrahydrofolate to 5,10-methenyltetrahydrofolate and then the hydrolysis of 5,10-methenyltetrahydrofolate to 10-formyltetrahydrofolate. This chain is Bifunctional protein FolD, found in Alteromonas mediterranea (strain DSM 17117 / CIP 110805 / LMG 28347 / Deep ecotype).